The primary structure comprises 56 residues: Large ribosomal subunit protein bL32 (56 aa).

The tract at residues 1 to 35 (MAVQQNKSTRSKRGMRRSHHALRSVTISVDRTSGE) is disordered. A compositionally biased stretch (basic residues) spans 9-22 (TRSKRGMRRSHHAL).

This sequence belongs to the bacterial ribosomal protein bL32 family.

In Blochmanniella pennsylvanica (strain BPEN), this protein is Large ribosomal subunit protein bL32.